The chain runs to 483 residues: Betaine aldehyde dehydrogenase (483 aa).

Residues I27 and D93 each coordinate K(+). 149–151 (GAW) contributes to the NAD(+) binding site. The active-site Charge relay system is the K161. Residue 175 to 178 (KPSE) participates in NAD(+) binding. Residue V179 coordinates K(+). NAD(+) is bound at residue 228–231 (SVPT). V243 is a binding site for K(+). The Proton acceptor role is filled by E249. The NAD(+) site is built by G251, C283, and E380. The active-site Nucleophile is C283. Position 283 is a cysteine sulfenic acid (-SOH) (C283). K(+) is bound by residues K450 and G453. Catalysis depends on E457, which acts as the Charge relay system.

It belongs to the aldehyde dehydrogenase family. In terms of assembly, dimer of dimers. Requires K(+) as cofactor.

It carries out the reaction betaine aldehyde + NAD(+) + H2O = glycine betaine + NADH + 2 H(+). It functions in the pathway amine and polyamine biosynthesis; betaine biosynthesis via choline pathway; betaine from betaine aldehyde: step 1/1. Its function is as follows. Involved in the biosynthesis of the osmoprotectant glycine betaine. Catalyzes the irreversible oxidation of betaine aldehyde to the corresponding acid. This chain is Betaine aldehyde dehydrogenase, found in Cereibacter sphaeroides (strain ATCC 17023 / DSM 158 / JCM 6121 / CCUG 31486 / LMG 2827 / NBRC 12203 / NCIMB 8253 / ATH 2.4.1.) (Rhodobacter sphaeroides).